Here is a 235-residue protein sequence, read N- to C-terminus: Chromosome partition protein MukE (235 aa).

Positions 204 to 235 are disordered; the sequence is QQEPSQSSLLDGFDADDTGHHDSELTMQEGEV.

Belongs to the MukE family. Interacts, and probably forms a ternary complex, with MukF and MukB. The complex formation is stimulated by calcium or magnesium.

The protein localises to the cytoplasm. It is found in the nucleoid. In terms of biological role, involved in chromosome condensation, segregation and cell cycle progression. May participate in facilitating chromosome segregation by condensation DNA from both sides of a centrally located replisome during cell division. Probably acts via its interaction with MukB and MukF. The protein is Chromosome partition protein MukE of Photobacterium profundum (strain SS9).